A 546-amino-acid chain; its full sequence is Chaperonin GroEL (546 aa).

ATP contacts are provided by residues 29 to 32 (TLGP), K50, 86 to 90 (DGTTT), G415, and D495.

The protein belongs to the chaperonin (HSP60) family. As to quaternary structure, forms a cylinder of 14 subunits composed of two heptameric rings stacked back-to-back. Interacts with the co-chaperonin GroES.

It localises to the cytoplasm. The catalysed reaction is ATP + H2O + a folded polypeptide = ADP + phosphate + an unfolded polypeptide.. Together with its co-chaperonin GroES, plays an essential role in assisting protein folding. The GroEL-GroES system forms a nano-cage that allows encapsulation of the non-native substrate proteins and provides a physical environment optimized to promote and accelerate protein folding. The polypeptide is Chaperonin GroEL (Parabacteroides distasonis (strain ATCC 8503 / DSM 20701 / CIP 104284 / JCM 5825 / NCTC 11152)).